A 1206-amino-acid chain; its full sequence is Cilia- and flagella-associated protein 157 (1206 aa).

Disordered regions lie at residues 26-52 (GGGGGSAAAAAMQEEQGEQEGPTGRDL), 79-109 (RAEQEHPQEGRPQQQEQGGEARQEQQGQQAP), 125-173 (EATC…RGPL), and 327-405 (GSGK…EEDW). 3 stretches are compositionally biased toward low complexity: residues 88 to 109 (GRPQQQEQGGEARQEQQGQQAP), 156 to 173 (AKAVARGPRGAGTARGPL), and 385 to 397 (QQLGEQPGEQPGG). Coiled coils occupy residues 634 to 732 (TDEL…KTKD), 799 to 833 (TEKLLNKNNKLMEENAELRRQLELSKQTEEELARR), and 876 to 903 (LHLAQLQLEEKSAEADALRERLESKTAE). Disordered regions lie at residues 936-990 (TTTN…DELS), 1011-1072 (LSHG…GATS), and 1168-1206 (PWGKRSEQQPLTTTKHSGTFLRKGNGPSNNTGSRGSLKV). Composition is skewed to low complexity over residues 951–973 (AGADAAGGSRSGSPTPPGASSSA) and 1014–1035 (GPLSQSSPAPLSAGGMGSALAG). Gly residues-rich tracts occupy residues 1037–1046 (WGPGSPGGSR) and 1058–1067 (SAGGMGGPQG). Polar residues-rich tracts occupy residues 1175–1184 (QQPLTTTKHS) and 1193–1206 (GPSNNTGSRGSLKV).

Belongs to the CFAP157 family.

It is found in the cell projection. The protein resides in the cilium. Its subcellular location is the flagellum. The sequence is that of Cilia- and flagella-associated protein 157 from Chlamydomonas reinhardtii (Chlamydomonas smithii).